The sequence spans 227 residues: UPF0659 protein YMR090W (227 aa).

The protein belongs to the UPF0659 family.

The protein localises to the cytoplasm. The polypeptide is UPF0659 protein YMR090W (Saccharomyces cerevisiae (strain ATCC 204508 / S288c) (Baker's yeast)).